The following is a 237-amino-acid chain: Class B acid phosphatase (237 aa).

Positions 1-25 (MRKVSLALSAACLLFTLNYTASALA) are cleaved as a signal peptide. D69 serves as the catalytic Nucleophile. 2 residues coordinate Mg(2+): D69 and D71. D71 serves as the catalytic Proton donor. Substrate is bound by residues 137–138 (TG) and K177. Position 192 (D192) interacts with Mg(2+).

This sequence belongs to the class B bacterial acid phosphatase family. As to quaternary structure, homotetramer. Requires Mg(2+) as cofactor.

It localises to the periplasm. The enzyme catalyses a phosphate monoester + H2O = an alcohol + phosphate. Its function is as follows. Dephosphorylates several organic phosphate monoesters. Also has a phosphotransferase activity catalyzing the transfer of low-energy phosphate groups from organic phosphate monoesters to free hydroxyl groups of various organic compounds. The protein is Class B acid phosphatase of Citrobacter rodentium (strain ICC168) (Citrobacter freundii biotype 4280).